A 254-amino-acid chain; its full sequence is Dihydroorotate dehydrogenase B (NAD(+)), electron transfer subunit (254 aa).

The FAD-binding FR-type domain maps to methionine 1–leucine 99. FAD is bound by residues arginine 50–serine 53, leucine 67–arginine 69, and glycine 74–threonine 75. [2Fe-2S] cluster is bound by residues cysteine 218, cysteine 223, cysteine 226, and cysteine 241.

Belongs to the PyrK family. Heterotetramer of 2 PyrK and 2 PyrD type B subunits. The cofactor is [2Fe-2S] cluster. Requires FAD as cofactor.

Its pathway is pyrimidine metabolism; UMP biosynthesis via de novo pathway; orotate from (S)-dihydroorotate (NAD(+) route): step 1/1. Its function is as follows. Responsible for channeling the electrons from the oxidation of dihydroorotate from the FMN redox center in the PyrD type B subunit to the ultimate electron acceptor NAD(+). This chain is Dihydroorotate dehydrogenase B (NAD(+)), electron transfer subunit, found in Listeria innocua serovar 6a (strain ATCC BAA-680 / CLIP 11262).